The following is a 186-amino-acid chain: Ribosome-recycling factor (186 aa).

The protein belongs to the RRF family.

The protein resides in the cytoplasm. In terms of biological role, responsible for the release of ribosomes from messenger RNA at the termination of protein biosynthesis. May increase the efficiency of translation by recycling ribosomes from one round of translation to another. In Rickettsia massiliae (strain Mtu5), this protein is Ribosome-recycling factor.